We begin with the raw amino-acid sequence, 327 residues long: MHRTAIFLTYRSCMRNFSTLSKTLTVSSGKVIRNGPFRRVIREKNQITKAPSVKAFKENSNSGIIKVHDPIATTILNEPTVIIERQIEFMNVFLGFEQANRYAIMDVNGNKIASMMERDFSITKAIMRQFYRLHRPFLVDVFDNWGNVIMTIKRPFSFINSHIKTIIPPSAYVDNGSDSTHYHDGKEGTTVGETIQNWHLWRRRYELFQKDGVEGSTFDQFGKIDAPFLSFDFPVTDADGKIMASVDRNWVGLGREMFTDTGVYVVRFDSQRCFDNIYPTEMLSSQVLTLDQRAVLLANAVSIDFDYFSRHSRQTGGFLSFGGGYDE.

It belongs to the phospholipid scramblase family.

It localises to the mitochondrion. The chain is Altered inheritance rate of mitochondria protein 25 (AIM25) from Saccharomyces cerevisiae (strain ATCC 204508 / S288c) (Baker's yeast).